Reading from the N-terminus, the 228-residue chain is Heptaprenylglyceryl phosphate synthase (228 aa).

Lys12 is a binding site for sn-glycerol 1-phosphate. Positions 14 and 40 each coordinate Mg(2+). Sn-glycerol 1-phosphate-binding positions include 158–163 (YLEYSG), Gly188, and 208–209 (GN).

The protein belongs to the GGGP/HepGP synthase family. Group I subfamily. In terms of assembly, homodimer. Mg(2+) is required as a cofactor.

The enzyme catalyses sn-glycerol 1-phosphate + all-trans-heptaprenyl diphosphate = 3-heptaprenyl-sn-glycero-1-phosphate + diphosphate. It functions in the pathway membrane lipid metabolism; glycerophospholipid metabolism. Prenyltransferase that catalyzes in vivo the transfer of the heptaprenyl moiety of heptaprenyl pyrophosphate (HepPP; 35 carbon atoms) to the C3 hydroxyl of sn-glycerol-1-phosphate (G1P), producing heptaprenylglyceryl phosphate (HepGP). This reaction is an ether-bond-formation step in the biosynthesis of archaea-type G1P-based membrane lipids found in Bacillales. To a much lesser extent, is also able to use geranyl diphosphate (GPP; C10) and geranylgeranyl diphosphate (GGPP; C20) as the prenyl donors, but not farnesyl pyrophosphate (FPP; C15). Cannot use glycerol-3-phosphate (G3P) or 3-phosphoglycerate (3PG) as an acceptor. This is Heptaprenylglyceryl phosphate synthase from Bacillus subtilis (strain 168).